The primary structure comprises 223 residues: Histone H1.5 (223 aa).

Over residues 1 to 14 the composition is skewed to low complexity; that stretch reads MSETAPAETAAPAP. Positions 1-56 are disordered; sequence MSETAPAETAAPAPVEKSPAKKKTTKKAGAAKRKATGPPVSELITKAVSASKERGG. The residue at position 2 (Ser-2) is an N-acetylserine. At Ser-2 the chain carries Phosphoserine. Lys-17 carries the post-translational modification N6-acetyllysine. Ser-18 bears the Phosphoserine mark. Over residues 20-35 the composition is skewed to basic residues; it reads AKKKTTKKAGAAKRKA. The residue at position 27 (Lys-27) is an N6-methyllysine. Lys-34 bears the N6-(beta-hydroxybutyryl)lysine; alternate mark. Lys-34 carries the N6-succinyllysine; alternate modification. Position 36 is a phosphothreonine (Thr-36). Residues 36–109 enclose the H15 domain; it reads TGPPVSELIT…GASGSFKLNK (74 aa). Lys-46 is modified (N6-acetyllysine). Position 52 is an N6-(beta-hydroxybutyryl)lysine (Lys-52). Citrulline is present on Arg-54. At Lys-64 the chain carries N6-(beta-hydroxybutyryl)lysine. Position 75 is an N6-acetyllysine (Lys-75). 3 positions are modified to N6-(beta-hydroxybutyryl)lysine: Lys-85, Lys-90, and Lys-106. The segment at 91-223 is disordered; it reads GTLVQTKGTG…KAKKAVSKKK (133 aa). Positions 119 to 130 are enriched in basic residues; it reads KAKKTGAAKAKK. Phosphothreonine occurs at positions 135 and 152. Positions 137 to 158 are enriched in basic residues; sequence KKPKKTAGAKKTVKKTPKKAKK. Lys-165 is modified (N6-acetyllysine). The segment covering 166-184 has biased composition (basic residues); sequence KVAKSPKKAKAAAKPKKAA. Residues Ser-170 and Ser-186 each carry the phosphoserine modification. The segment covering 191–223 has biased composition (basic residues); it reads KAVKSKASKPKVTKPKTAKPKAAKAKKAVSKKK.

The protein belongs to the histone H1/H5 family. As to quaternary structure, interacts with MSX1. In terms of processing, H1 histones are progressively phosphorylated during the cell cycle, becoming maximally phosphorylated during late G2 phase and M phase, and being dephosphorylated sharply thereafter. Post-translationally, citrullination at Arg-54 (H1R54ci) by PADI4 takes place within the DNA-binding site of H1 and results in its displacement from chromatin and global chromatin decondensation, thereby promoting pluripotency and stem cell maintenance. Hydroxybutyrylation of histones is induced by starvation.

The protein localises to the nucleus. It is found in the chromosome. Histone H1 protein binds to linker DNA between nucleosomes forming the macromolecular structure known as the chromatin fiber. Histones H1 are necessary for the condensation of nucleosome chains into higher-order structured fibers. Also acts as a regulator of individual gene transcription through chromatin remodeling, nucleosome spacing and DNA methylation. The sequence is that of Histone H1.5 (H1-5) from Mus musculus (Mouse).